Reading from the N-terminus, the 184-residue chain is Large ribosomal subunit protein uL5 (184 aa).

This sequence belongs to the universal ribosomal protein uL5 family. Part of the 50S ribosomal subunit; part of the 5S rRNA/L5/L18/L25 subcomplex. Contacts the 5S rRNA and the P site tRNA. Forms a bridge to the 30S subunit in the 70S ribosome.

Its function is as follows. This is one of the proteins that bind and probably mediate the attachment of the 5S RNA into the large ribosomal subunit, where it forms part of the central protuberance. In the 70S ribosome it contacts protein S13 of the 30S subunit (bridge B1b), connecting the 2 subunits; this bridge is implicated in subunit movement. Contacts the P site tRNA; the 5S rRNA and some of its associated proteins might help stabilize positioning of ribosome-bound tRNAs. The protein is Large ribosomal subunit protein uL5 of Fervidobacterium nodosum (strain ATCC 35602 / DSM 5306 / Rt17-B1).